We begin with the raw amino-acid sequence, 758 residues long: 5-methyltetrahydropteroyltriglutamate--homocysteine methyltransferase (758 aa).

5-methyltetrahydropteroyltri-L-glutamate-binding positions include 16-19 and lysine 112; that span reads RELK. L-homocysteine-binding positions include 433–435 and glutamate 486; that span reads IGS. Residues 433-435 and glutamate 486 contribute to the L-methionine site; that span reads IGS. 5-methyltetrahydropteroyltri-L-glutamate-binding positions include 517-518 and tryptophan 563; that span reads RC. L-homocysteine is bound at residue aspartate 601. L-methionine is bound at residue aspartate 601. A 5-methyltetrahydropteroyltri-L-glutamate-binding site is contributed by glutamate 607. Zn(2+) is bound by residues histidine 643, cysteine 645, and glutamate 667. The active-site Proton donor is the histidine 696. Zn(2+) is bound at residue cysteine 728.

It belongs to the vitamin-B12 independent methionine synthase family. It depends on Zn(2+) as a cofactor.

The catalysed reaction is 5-methyltetrahydropteroyltri-L-glutamate + L-homocysteine = tetrahydropteroyltri-L-glutamate + L-methionine. Its pathway is amino-acid biosynthesis; L-methionine biosynthesis via de novo pathway; L-methionine from L-homocysteine (MetE route): step 1/1. Catalyzes the transfer of a methyl group from 5-methyltetrahydrofolate to homocysteine resulting in methionine formation. This Neisseria meningitidis serogroup B (strain ATCC BAA-335 / MC58) protein is 5-methyltetrahydropteroyltriglutamate--homocysteine methyltransferase.